Here is a 523-residue protein sequence, read N- to C-terminus: Probable glucose-1-phosphate adenylyltransferase large subunit, chloroplastic (523 aa).

Belongs to the bacterial/plant glucose-1-phosphate adenylyltransferase family. As to quaternary structure, heterotetramer.

It is found in the plastid. The protein localises to the chloroplast. It carries out the reaction alpha-D-glucose 1-phosphate + ATP + H(+) = ADP-alpha-D-glucose + diphosphate. Its pathway is glycan biosynthesis; starch biosynthesis. Activated by 3'phosphoglycerate, inhibited by orthophosphate. Allosteric regulation. Its function is as follows. This protein plays a role in synthesis of starch. It catalyzes the synthesis of the activated glycosyl donor, ADP-glucose from Glc-1-P and ATP. In Arabidopsis thaliana (Mouse-ear cress), this protein is Probable glucose-1-phosphate adenylyltransferase large subunit, chloroplastic.